Reading from the N-terminus, the 377-residue chain is Glutamate 5-kinase (377 aa).

Position 22 (lysine 22) interacts with ATP. Positions 62, 149, and 161 each coordinate substrate. Residues 181 to 182 and 223 to 229 contribute to the ATP site; these read TD and TGGMVTK. Residues 285–363 enclose the PUA domain; the sequence is RGAIVVDAGA…AQLKRFLGPQ (79 aa).

Belongs to the glutamate 5-kinase family.

The protein resides in the cytoplasm. It carries out the reaction L-glutamate + ATP = L-glutamyl 5-phosphate + ADP. It functions in the pathway amino-acid biosynthesis; L-proline biosynthesis; L-glutamate 5-semialdehyde from L-glutamate: step 1/2. Its function is as follows. Catalyzes the transfer of a phosphate group to glutamate to form L-glutamate 5-phosphate. The chain is Glutamate 5-kinase from Bifidobacterium longum subsp. infantis (strain ATCC 15697 / DSM 20088 / JCM 1222 / NCTC 11817 / S12).